The chain runs to 497 residues: Lysine--tRNA ligase (497 aa).

Mg(2+) is bound by residues Glu-405 and Glu-412.

Belongs to the class-II aminoacyl-tRNA synthetase family. As to quaternary structure, homodimer. It depends on Mg(2+) as a cofactor.

It is found in the cytoplasm. It carries out the reaction tRNA(Lys) + L-lysine + ATP = L-lysyl-tRNA(Lys) + AMP + diphosphate. This Gloeobacter violaceus (strain ATCC 29082 / PCC 7421) protein is Lysine--tRNA ligase.